The sequence spans 638 residues: 1-deoxy-D-xylulose-5-phosphate synthase (638 aa).

Residues histidine 75 and 116–118 (AHS) contribute to the thiamine diphosphate site. Residue aspartate 147 participates in Mg(2+) binding. Residues 148 to 149 (GA), asparagine 177, tyrosine 288, and glutamate 370 contribute to the thiamine diphosphate site. Asparagine 177 is a Mg(2+) binding site.

This sequence belongs to the transketolase family. DXPS subfamily. As to quaternary structure, homodimer. Mg(2+) serves as cofactor. Thiamine diphosphate is required as a cofactor.

The catalysed reaction is D-glyceraldehyde 3-phosphate + pyruvate + H(+) = 1-deoxy-D-xylulose 5-phosphate + CO2. The protein operates within metabolic intermediate biosynthesis; 1-deoxy-D-xylulose 5-phosphate biosynthesis; 1-deoxy-D-xylulose 5-phosphate from D-glyceraldehyde 3-phosphate and pyruvate: step 1/1. Catalyzes the acyloin condensation reaction between C atoms 2 and 3 of pyruvate and glyceraldehyde 3-phosphate to yield 1-deoxy-D-xylulose-5-phosphate (DXP). This chain is 1-deoxy-D-xylulose-5-phosphate synthase, found in Cupriavidus taiwanensis (strain DSM 17343 / BCRC 17206 / CCUG 44338 / CIP 107171 / LMG 19424 / R1) (Ralstonia taiwanensis (strain LMG 19424)).